The primary structure comprises 872 residues: MSTLGKRAGVRRRVRAVATAATATALVAVPLTTLATSASAAPVHVDNPYAGAVQYVNPTWAASVNAAAGRQSADPALAAKMRTVAGQPTAVWMDRISAITGNADGNGLKFHLDNAVAQQKAAGVPLVFNLVIYDLPGRDCFALASNGELPATDAGLARYKSEYIDPIADLLDNPEYESIRIAATIEPDSLPNLTTNISEPACQQAAPYYRQGVKYALDKLHAIPNVYNYIDIGHSGWLGWDSNAGPSATLFAEVAKSTTAGFASIDGFVSDVANTTPLEEPLLSDSSLTINNTPIRSSKFYEWNFDFDEIDYTAHMHRLLVAAGFPSSIGMLVDTSRNGWGGPNRPTSITASTDVNAYVDANRVDRRVHRGAWCNPLGAGIGRFPEATPSGYAASHLDAFVWIKPPGESDGASTDIPNDQGKRFDRMCDPTFVSPKLNNQLTGATPNAPLAGQWFEEQFVTLVKNAYPVIGGTTPVEDLVAPTVPTGLTAGTTTATSVPLSWTASTDNVAVTGYDVYRGTTLVGTTAATSYTVTGLTPATAYSFTVRAKDAAGNVSAASAAAAATTQSGTVTDTTAPSVPAGLTAGTTTTTTVPLSWTASTDNAGGSGVAGYEVLRGTTVVGTTTATSYTVTGLTAGTTYSFSVRAKDVAGNTSAASAAVSATTQTGTVVDTTAPSVPTGLTAGTTTTSSVPLTWTASTDNAGGSGVAGYEVFNGTTRVATVTSTSYTVTGLAADTAYSFTVKAKDVAGNVSAASAAVSARTQAATSGGCTVKYSASSWNTGFTGTVEVKNNGTAALNGWTLGFSFADGQKVSQGWSAEWSQSGTAVTAKNAPWNGTLAAGSSVSIGFNGTHNGTNTAPTAFTLNGVACTLG.

A signal peptide spans 1–40; sequence MSTLGKRAGVRRRVRAVATAATATALVAVPLTTLATSASA. A catalytic region spans residues 41–477; the sequence is APVHVDNPYA…PVIGGTTPVE (437 aa). Intrachain disulfides connect cysteine 140–cysteine 202 and cysteine 374–cysteine 428. The Proton donor role is filled by aspartate 188. The active-site Nucleophile is aspartate 410. 3 consecutive Fibronectin type-III domains span residues 484–569, 579–667, and 677–765; these read VPTG…TQSG, VPAG…TQTG, and VPTG…TQAA. The CBM2 domain maps to 763–872; it reads QAATSGGCTV…TLNGVACTLG (110 aa). A disulfide bond links cysteine 770 and cysteine 869.

Belongs to the glycosyl hydrolase 6 (cellulase B) family.

It carries out the reaction Hydrolysis of (1-&gt;4)-beta-D-glucosidic linkages in cellulose and cellotetraose, releasing cellobiose from the non-reducing ends of the chains.. Functionally, this enzyme hydrolyzes 1,4-beta-D-glucosidic linkages of cellulose. Weak activity against carboxymethylcellulose, bacterial microcrystalline cellulose and barley beta-glucan. Also has weak endoglucanase activity. Hydrolyzes glucosidic bonds with inversion of anomeric configuration. The sequence is that of Exoglucanase A (cbhA) from Cellulomonas fimi (strain ATCC 484 / DSM 20113 / JCM 1341 / CCUG 24087 / LMG 16345 / NBRC 15513 / NCIMB 8980 / NCTC 7547 / NRS-133).